The sequence spans 360 residues: MKASLLKKLDVLSDRYEELTALLGDAEVISDQTRFRAYSREYAEVEPVILAFRDYRKVQADLEGAQALLKDSDPELRDLAEEEVAEARGRLAALGDSLQRMLLPKDPNDSRNVFLEIRAGTGGDEAAIFSGDLFRMYSRYAERQGWRIETLSENEGEHGGYKEVIARVEGDNVYAKLKFESGAHRVQRVPETESQGRIHTSACTVAVLPEPDEQAAIEINPADLRVDTYRSSGAGGQHVNKTDSAVRITHIPSGIVVECQEERSQHKNRAKAMAWLAAKLNDQQQAAAQQAIASTRKLLVGSGDRSERIRTYNFPQGRVTDHRINLTLYSLGEVMEGAVEQVIEPLLQEYQADQLAALGD.

The residue at position 237 (glutamine 237) is an N5-methylglutamine.

This sequence belongs to the prokaryotic/mitochondrial release factor family. Post-translationally, methylated by PrmC. Methylation increases the termination efficiency of RF1.

Its subcellular location is the cytoplasm. In terms of biological role, peptide chain release factor 1 directs the termination of translation in response to the peptide chain termination codons UAG and UAA. This chain is Peptide chain release factor 1 (prfA), found in Pseudomonas aeruginosa (strain ATCC 15692 / DSM 22644 / CIP 104116 / JCM 14847 / LMG 12228 / 1C / PRS 101 / PAO1).